We begin with the raw amino-acid sequence, 728 residues long: Elongation factor 2 (728 aa).

Residues 18-258 (KFIRNIGIVA…MVIRHLPSPI (241 aa)) enclose the tr-type G domain. GTP is bound by residues 27 to 34 (AHIDHGKT), 93 to 97 (DTPGH), and 147 to 150 (NKVD). A Diphthamide modification is found at histidine 594.

Belongs to the TRAFAC class translation factor GTPase superfamily. Classic translation factor GTPase family. EF-G/EF-2 subfamily.

It is found in the cytoplasm. In terms of biological role, catalyzes the GTP-dependent ribosomal translocation step during translation elongation. During this step, the ribosome changes from the pre-translocational (PRE) to the post-translocational (POST) state as the newly formed A-site-bound peptidyl-tRNA and P-site-bound deacylated tRNA move to the P and E sites, respectively. Catalyzes the coordinated movement of the two tRNA molecules, the mRNA and conformational changes in the ribosome. This is Elongation factor 2 (fusA) from Archaeoglobus fulgidus (strain ATCC 49558 / DSM 4304 / JCM 9628 / NBRC 100126 / VC-16).